A 540-amino-acid polypeptide reads, in one-letter code: Chaperonin GroEL (540 aa).

Residues 30–33, 87–91, Gly414, 479–481, and Asp495 contribute to the ATP site; these read TLGP, DGTTT, and NAL.

Belongs to the chaperonin (HSP60) family. As to quaternary structure, forms a cylinder of 14 subunits composed of two heptameric rings stacked back-to-back. Interacts with the co-chaperonin GroES.

It is found in the cytoplasm. It carries out the reaction ATP + H2O + a folded polypeptide = ADP + phosphate + an unfolded polypeptide.. Functionally, together with its co-chaperonin GroES, plays an essential role in assisting protein folding. The GroEL-GroES system forms a nano-cage that allows encapsulation of the non-native substrate proteins and provides a physical environment optimized to promote and accelerate protein folding. This is Chaperonin GroEL from Rubrobacter xylanophilus (strain DSM 9941 / JCM 11954 / NBRC 16129 / PRD-1).